Reading from the N-terminus, the 319-residue chain is ATP-dependent 6-phosphofructokinase (319 aa).

Gly11 contributes to the ATP binding site. 21 to 25 (RAVVR) is an ADP binding site. ATP-binding positions include 72–73 (RC) and 102–105 (GDGS). A Mg(2+)-binding site is contributed by Asp103. 125 to 127 (TID) contacts substrate. Asp127 functions as the Proton acceptor in the catalytic mechanism. Residue Arg154 coordinates ADP. Substrate-binding positions include Arg162 and 169 to 171 (MGR). ADP contacts are provided by residues 185–187 (GAE), Arg211, and 213–215 (KKH). Substrate contacts are provided by residues Glu222, Arg243, and 249–252 (HVQR).

Belongs to the phosphofructokinase type A (PFKA) family. ATP-dependent PFK group I subfamily. Prokaryotic clade 'B1' sub-subfamily. As to quaternary structure, homotetramer. Requires Mg(2+) as cofactor.

It localises to the cytoplasm. The catalysed reaction is beta-D-fructose 6-phosphate + ATP = beta-D-fructose 1,6-bisphosphate + ADP + H(+). Its pathway is carbohydrate degradation; glycolysis; D-glyceraldehyde 3-phosphate and glycerone phosphate from D-glucose: step 3/4. With respect to regulation, allosterically activated by ADP and other diphosphonucleosides, and allosterically inhibited by phosphoenolpyruvate. Catalyzes the phosphorylation of D-fructose 6-phosphate to fructose 1,6-bisphosphate by ATP, the first committing step of glycolysis. The sequence is that of ATP-dependent 6-phosphofructokinase from Bacillus cereus (strain ATCC 14579 / DSM 31 / CCUG 7414 / JCM 2152 / NBRC 15305 / NCIMB 9373 / NCTC 2599 / NRRL B-3711).